The following is a 292-amino-acid chain: MSHLSQQRIYSGENPFACKVCGKVFSHKSNLTEHEHFHTREKPFECNECGKAFSQKQYVIKHQNTHTGEKLFECNECGKSFSQKENLLTHQKIHTGEKPFECKDCGKAFIQKSNLIRHQRTHTGEKPFVCKECGKTFSGKSNLTEHEKIHIGEKPFKCSECGTAFGQKKYLIKHQNIHTGEKPYECNECGKAFSQRTSLIVHVRIHSGDKPYECNVCGKAFSQSSSLTVHVRSHTGEKPYGCNECGKAFSQFSTLALHLRIHTGKKPYQCSECGKAFSQKSHHIRHQKIHTH.

10 consecutive C2H2-type zinc fingers follow at residues 16-38 (FACKVCGKVFSHKSNLTEHEHFH), 44-66 (FECNECGKAFSQKQYVIKHQNTH), 72-94 (FECNECGKSFSQKENLLTHQKIH), 100-122 (FECKDCGKAFIQKSNLIRHQRTH), 128-150 (FVCKECGKTFSGKSNLTEHEKIH), 156-178 (FKCSECGTAFGQKKYLIKHQNIH), 184-206 (YECNECGKAFSQRTSLIVHVRIH), 212-234 (YECNVCGKAFSQSSSLTVHVRSH), 240-262 (YGCNECGKAFSQFSTLALHLRIH), and 268-290 (YQCSECGKAFSQKSHHIRHQKIH). Glycyl lysine isopeptide (Lys-Gly) (interchain with G-Cter in SUMO2) cross-links involve residues K28, K51, and K56. Glycyl lysine isopeptide (Lys-Gly) (interchain with G-Cter in SUMO) cross-links involve residues K157 and K169. K173 is covalently cross-linked (Glycyl lysine isopeptide (Lys-Gly) (interchain with G-Cter in SUMO2)). Positions 212 to 292 (YECNVCGKAF…HIRHQKIHTH (81 aa)) are interaction with TERF2IP.

It belongs to the krueppel C2H2-type zinc-finger protein family. Binds DNA. Interacts with SUMO conjugating enzyme UBC9/UBE2I. Interacts with the telomeric protein TERF2IP. Sumoylated. As to expression, liver, skeletal and heart muscle, mammary cells. Very low levels in brain, lung, placenta and kidney. Strongly overexpressed in many pancreas and colorectal cancers. Increased gene copy numbers are detected in 3 of 12 tumor cell lines and 2 of 12 primary pancreatic carcinomas. Overexpressed in 80% of colorectal cancers.

The protein localises to the nucleus. The chain is Zinc finger protein OZF (ZNF146) from Homo sapiens (Human).